The primary structure comprises 458 residues: BPI fold-containing family B member 2 (458 aa).

The first 20 residues, 1–20, serve as a signal peptide directing secretion; sequence MAWASRLGLLLALLLPVVGA. At Thr-52 the chain carries Phosphothreonine; by FAM20C. Ser-60 bears the Phosphoserine; by FAM20C mark. N-linked (GlcNAc...) asparagine glycosylation is found at Asn-96, Asn-151, Asn-293, and Asn-332. Cysteines 137 and 174 form a disulfide.

It belongs to the BPI/LBP/Plunc superfamily. BPI/LBP family. In terms of tissue distribution, highly expressed in tonsils, especially in hypertrophic tonsils. Detected at very low levels in fetal liver.

The protein resides in the secreted. This chain is BPI fold-containing family B member 2 (BPIFB2), found in Homo sapiens (Human).